We begin with the raw amino-acid sequence, 432 residues long: MGSCSLQLPLINLADKTLEPGSSKWAEVRSDVRKALQDFGCFEASYDKVSLELQESIMKTMEELFALPVETKQRNVCPKPYVGYLNHNNLSESLGISNANILENINEFTQQLWPHGDGNENISKTIQLFAEKLVEIDVMVRRMVMESFGIEKYIDDHLKSTEYRMRLMKYIAPPEGDANTTVDDYADLLAKLNIDGVEPNVGVKVNADISDDVNANPSVNAGVGANVNADTGVNDNLNVDAEANGDANIAVGGGVNANTDLGVGVNVNSNVAVNAKTGATSGDDVEANDDNEEKKLGLPCHTDKNLFTVLFQHEIEGLEVKTKDEKWIRVKPSPNTFIVIAGDSLCALMNGRIRAPYHRVRVTEKKRTRYTAAIFTCPKPDYVIEAPKELVDEKHPRLFRPFDYRDLFTFYHSEAGRKIQYTLQAYCAVSEA.

Residues 281–378 (SGDDVEANDD…RYTAAIFTCP (98 aa)) enclose the Fe2OG dioxygenase domain. 3 residues coordinate Fe cation: histidine 301, aspartate 303, and histidine 358. Position 369 (arginine 369) interacts with 2-oxoglutarate.

It belongs to the iron/ascorbate-dependent oxidoreductase family. The cofactor is Fe(2+).

2-oxoglutarate-dependent dioxygenase involved in glucosinolates biosynthesis. Catalyzes the conversion of methylsulfinylalkyl glucosinolates to alkenyl glucosinolates. In Arabidopsis thaliana (Mouse-ear cress), this protein is 2-oxoglutarate-dependent dioxygenase AOP2 (AOP2).